An 83-amino-acid chain; its full sequence is Cytochrome b559 subunit alpha (83 aa).

The chain crosses the membrane as a helical span at residues 21-35 (IIHSITIPSLFIAGW). Histidine 23 contacts heme.

As to quaternary structure, heterodimer of an alpha subunit and a beta subunit. PSII is composed of 1 copy each of membrane proteins PsbA, PsbB, PsbC, PsbD, PsbE, PsbF, PsbH, PsbI, PsbJ, PsbK, PsbL, PsbM, PsbT, PsbX, PsbY, PsbZ, Psb30/Ycf12, at least 3 peripheral proteins of the oxygen-evolving complex and a large number of cofactors. It forms dimeric complexes. It depends on heme b as a cofactor.

It is found in the plastid. The protein localises to the chloroplast thylakoid membrane. Functionally, this b-type cytochrome is tightly associated with the reaction center of photosystem II (PSII). PSII is a light-driven water:plastoquinone oxidoreductase that uses light energy to abstract electrons from H(2)O, generating O(2) and a proton gradient subsequently used for ATP formation. It consists of a core antenna complex that captures photons, and an electron transfer chain that converts photonic excitation into a charge separation. The protein is Cytochrome b559 subunit alpha of Pisum sativum (Garden pea).